The chain runs to 461 residues: tRNA modification GTPase MnmE (461 aa).

(6S)-5-formyl-5,6,7,8-tetrahydrofolate contacts are provided by Arg27, Glu89, and Arg128. In terms of domain architecture, TrmE-type G spans 224–382 (GLATAIVGRP…LENAIEKLFF (159 aa)). Asn234 contributes to the K(+) binding site. GTP is bound by residues 234 to 239 (NVGKSS), 253 to 259 (TDIAGTT), and 278 to 281 (DTAG). Residue Ser238 participates in Mg(2+) binding. The K(+) site is built by Thr253, Ile255, and Thr258. Thr259 lines the Mg(2+) pocket. Lys461 is a (6S)-5-formyl-5,6,7,8-tetrahydrofolate binding site.

It belongs to the TRAFAC class TrmE-Era-EngA-EngB-Septin-like GTPase superfamily. TrmE GTPase family. Homodimer. Heterotetramer of two MnmE and two MnmG subunits. Requires K(+) as cofactor.

It is found in the cytoplasm. Its function is as follows. Exhibits a very high intrinsic GTPase hydrolysis rate. Involved in the addition of a carboxymethylaminomethyl (cmnm) group at the wobble position (U34) of certain tRNAs, forming tRNA-cmnm(5)s(2)U34. The protein is tRNA modification GTPase MnmE of Lactobacillus gasseri (strain ATCC 33323 / DSM 20243 / BCRC 14619 / CIP 102991 / JCM 1131 / KCTC 3163 / NCIMB 11718 / NCTC 13722 / AM63).